Consider the following 352-residue polypeptide: Cyclin-O (352 aa).

Residues 1–40 form a disordered region; that stretch reads MVTPCPASPGSPAAGAGRRDSHQNLRAPVKKSRRPCLRRK. Over residues 28–40 the composition is skewed to basic residues; the sequence is PVKKSRRPCLRRK. Position 83 is a phosphoserine (Ser83).

The protein belongs to the cyclin family. In terms of tissue distribution, present in respiratory cells (at protein level). Expressed in multiciliated tissue in brain and fallopian tube (at protein level). Highly expressed in oocytes.

It is found in the cytoplasm. The protein resides in the nucleus. It localises to the nucleolus. In terms of biological role, specifically required for generation of multiciliated cells, possibly by promoting a cell cycle state compatible with centriole amplification and maturation. Acts downstream of MCIDAS to promote mother centriole amplification and maturation in preparation for apical docking. May be involved in apoptosis in lymphoid cells; however, this result requires additional evidences in vivo. May be involved in oocyte meiotic resumption in oocytes. This chain is Cyclin-O, found in Mus musculus (Mouse).